The following is a 128-amino-acid chain: Large ribosomal subunit protein bL17 (128 aa).

It belongs to the bacterial ribosomal protein bL17 family. As to quaternary structure, part of the 50S ribosomal subunit. Contacts protein L32.

This chain is Large ribosomal subunit protein bL17, found in Streptococcus thermophilus (strain ATCC BAA-250 / LMG 18311).